Here is a 340-residue protein sequence, read N- to C-terminus: L-threonine 3-dehydrogenase (340 aa).

Cys38 contributes to the Zn(2+) binding site. Catalysis depends on charge relay system residues Thr40 and His43. 6 residues coordinate Zn(2+): His63, Glu64, Cys93, Cys96, Cys99, and Cys107. Residues Ile175, Asp195, Arg200, 261 to 263, and 285 to 286 each bind NAD(+); these read LGI and IY.

This sequence belongs to the zinc-containing alcohol dehydrogenase family. In terms of assembly, homotetramer. It depends on Zn(2+) as a cofactor.

It localises to the cytoplasm. It catalyses the reaction L-threonine + NAD(+) = (2S)-2-amino-3-oxobutanoate + NADH + H(+). It functions in the pathway amino-acid degradation; L-threonine degradation via oxydo-reductase pathway; glycine from L-threonine: step 1/2. In terms of biological role, catalyzes the NAD(+)-dependent oxidation of L-threonine to 2-amino-3-ketobutyrate. The protein is L-threonine 3-dehydrogenase of Xanthomonas axonopodis pv. citri (strain 306).